Reading from the N-terminus, the 158-residue chain is Transcriptional repressor NrdR (158 aa).

The segment at 3–34 (CPFCGSLDTQVIDSRANEAGDAIRRRRRCAAC) is a zinc-finger region. One can recognise an ATP-cone domain in the interval 49–139 (PQIVKTNGTR…VYKSFKDPDD (91 aa)).

The protein belongs to the NrdR family. Requires Zn(2+) as cofactor.

Negatively regulates transcription of bacterial ribonucleotide reductase nrd genes and operons by binding to NrdR-boxes. This chain is Transcriptional repressor NrdR, found in Thiobacillus denitrificans (strain ATCC 25259 / T1).